Here is a 241-residue protein sequence, read N- to C-terminus: Uridylate kinase (241 aa).

15 to 18 (KLSG) contributes to the ATP binding site. Positions 23-28 (GSEGFG) are involved in allosteric activation by GTP. Residue Gly-57 participates in UMP binding. ATP is bound by residues Gly-58 and Arg-62. Residues Asp-77 and 138–145 (TGNPFFTT) contribute to the UMP site. Residues Thr-165, Phe-171, and Asp-174 each coordinate ATP.

This sequence belongs to the UMP kinase family. As to quaternary structure, homohexamer.

It is found in the cytoplasm. It carries out the reaction UMP + ATP = UDP + ADP. It participates in pyrimidine metabolism; CTP biosynthesis via de novo pathway; UDP from UMP (UMPK route): step 1/1. Its activity is regulated as follows. Allosterically activated by GTP. Inhibited by UTP. Its function is as follows. Catalyzes the reversible phosphorylation of UMP to UDP. The sequence is that of Uridylate kinase from Klebsiella pneumoniae subsp. pneumoniae (strain ATCC 700721 / MGH 78578).